Reading from the N-terminus, the 80-residue chain is UPF0125 protein PD_1376 (80 aa).

Belongs to the UPF0125 (RnfH) family.

This chain is UPF0125 protein PD_1376, found in Xylella fastidiosa (strain Temecula1 / ATCC 700964).